Consider the following 203-residue polypeptide: Outer-membrane lipoprotein carrier protein (203 aa).

The first 19 residues, 1–19 (MKKSIVVLFSAVLPFAVFA), serve as a signal peptide directing secretion.

It belongs to the LolA family. As to quaternary structure, monomer.

The protein localises to the periplasm. In terms of biological role, participates in the translocation of lipoproteins from the inner membrane to the outer membrane. Only forms a complex with a lipoprotein if the residue after the N-terminal Cys is not an aspartate (The Asp acts as a targeting signal to indicate that the lipoprotein should stay in the inner membrane). The polypeptide is Outer-membrane lipoprotein carrier protein (Shewanella amazonensis (strain ATCC BAA-1098 / SB2B)).